A 188-amino-acid chain; its full sequence is Protease-associated domain-containing protein 1 (188 aa).

The first 21 residues, 1–21 (MVPGAAGWCCLVLWLPACVAA), serve as a signal peptide directing secretion. In terms of domain architecture, PA spans 83–163 (IQDQIALVER…RSLEQHGLPW (81 aa)). N-linked (GlcNAc...) asparagine glycosylation occurs at Asn-171.

N-glycosylated; required for efficient secretion. In terms of tissue distribution, highly expressed in skeletal muscle, heart and liver. Expressed at intermediate level in kidney.

The protein localises to the secreted. Its function is as follows. Plays a role in the modulation of physical activity and adiposity. The chain is Protease-associated domain-containing protein 1 from Homo sapiens (Human).